The chain runs to 107 residues: Essential MCU regulator, mitochondrial (107 aa).

The transit peptide at 1–47 (MASGAARWLALVRVGSGASRSWLSLRKGGDVSAGRSCSGQSLVPTRS) directs the protein to the mitochondrion. Topologically, residues 48 to 65 (VIVTRSGAILPKPVKMSF) are mitochondrial matrix. A helical transmembrane segment spans residues 66 to 85 (GLLRVFSIVIPFLYVGTLIS). A GXXXX[G/A/S] motif is present at residues 81–85 (GTLIS). Over 86 to 107 (KNFAALLEEHDIFVPEDDDDDD) the chain is Mitochondrial intermembrane.

This sequence belongs to the SMDT1/EMRE family. As to quaternary structure, component of the uniplex complex, composed of MCU, EMRE/SMDT1, MICU1 and MICU2 (or MICU3) in a 4:4:1:1 stoichiometry. The number of EMRE/SMDT1 molecules is hovewer variable, ranging from 1 to 4 copies per uniplex complex, leading to uniplex complexes with distinct gatekeeping profiles. Interacts (via its C-terminal poly-Asp tail) with MCUR1; the interaction is direct. Unprocessed form interacts (via transit peptide) with MAIP1. In terms of processing, undergoes proteolytic degradation in neurons: degraded by AFG3L2 and SPG7 before SMDT1/EMRE assembly with the uniporter complex, limiting the availability of SMDT1/EMRE for MCU assembly and promoting efficient assembly of gatekeeper subunits with MCU.

The protein resides in the mitochondrion inner membrane. Essential regulatory subunit of the mitochondrial calcium uniporter complex (uniplex), a complex that mediates calcium uptake into mitochondria. Required to bridge the calcium-sensing proteins MICU1 with the calcium-conducting subunit MCU. Acts by mediating activation of MCU and retention of MICU1 to the MCU pore, in order to ensure tight regulation of the uniplex complex and appropriate responses to intracellular calcium signaling. The polypeptide is Essential MCU regulator, mitochondrial (Bos taurus (Bovine)).